Here is a 501-residue protein sequence, read N- to C-terminus: GTPase Obg (501 aa).

The Obg domain maps to 2–159 (NRFIDRVVLH…HDLILELKSM (158 aa)). An OBG-type G domain is found at 160-341 (ADVGLVGFPS…LKYKLLEIVQ (182 aa)). Residues 166–173 (GFPSAGKS), 191–195 (FTTLQ), 212–215 (DVPG), 292–295 (NKAD), and 322–324 (SAV) each bind GTP. 2 residues coordinate Mg(2+): serine 173 and threonine 193. In terms of domain architecture, OCT spans 362-442 (VDHRTKGQFQ…IGGISFEWEP (81 aa)).

The protein belongs to the TRAFAC class OBG-HflX-like GTPase superfamily. OBG GTPase family. Monomer. The cofactor is Mg(2+).

It localises to the cytoplasm. Functionally, an essential GTPase which binds GTP, GDP and possibly (p)ppGpp with moderate affinity, with high nucleotide exchange rates and a fairly low GTP hydrolysis rate. Plays a role in control of the cell cycle, stress response, ribosome biogenesis and in those bacteria that undergo differentiation, in morphogenesis control. This is GTPase Obg from Corynebacterium glutamicum (strain R).